The sequence spans 282 residues: Serine/threonine-protein kinase Aurora-2 (282 aa).

The Protein kinase domain occupies 19 to 270 (FDIGKPLGRG…LHKLLEHPWI (252 aa)). ATP is bound by residues 25-33 (LGRGKFGHV) and Lys-48. The Proton acceptor role is filled by Asp-142. Residue Ser-164 is modified to Phosphoserine. Thr-173 is modified (phosphothreonine).

This sequence belongs to the protein kinase superfamily. Ser/Thr protein kinase family. Aurora subfamily. Phosphorylation at Thr-173 may regulate activity and degradation of AUR2 in a cell cycle dependent manner. Abundant in roots, flowers and flower buds, low or absent in expanded leaves, stems and siliques.

The protein localises to the nucleus membrane. It is found in the cytoplasm. Its subcellular location is the cytoskeleton. The protein resides in the spindle. It localises to the spindle pole. The enzyme catalyses L-seryl-[protein] + ATP = O-phospho-L-seryl-[protein] + ADP + H(+). The catalysed reaction is L-threonyl-[protein] + ATP = O-phospho-L-threonyl-[protein] + ADP + H(+). In terms of biological role, phosphorylates specifically 'Ser-10' of histone H3 in vitro. Associates with cytoskeletal structures that are necessary for cytokinesis and with the microtubule spindle. Might colocalize with gamma-tubulin and function in microtubule organizing centers (MTOCs). This is Serine/threonine-protein kinase Aurora-2 (AUR2) from Arabidopsis thaliana (Mouse-ear cress).